A 272-amino-acid chain; its full sequence is Zinc transporter ZupT (272 aa).

The next 8 helical transmembrane spans lie at alanine 12–phenylalanine 32, leucine 40–isoleucine 60, leucine 76–aspartate 96, leucine 126–alanine 146, alanine 158–phenylalanine 178, phenylalanine 187–leucine 207, valine 211–leucine 231, and histidine 247–phenylalanine 267. Residues asparagine 136 and glutamate 139 each coordinate Fe(2+). Positions 139 and 164 each coordinate Zn(2+). Fe(2+)-binding residues include asparagine 165, glutamate 168, and glutamate 197. Glutamate 168 serves as a coordination point for Zn(2+).

Belongs to the ZIP transporter (TC 2.A.5) family. ZupT subfamily.

The protein localises to the cell inner membrane. It carries out the reaction Zn(2+)(in) = Zn(2+)(out). Its function is as follows. Mediates zinc uptake. May also transport other divalent cations. The chain is Zinc transporter ZupT from Xanthomonas campestris pv. campestris (strain ATCC 33913 / DSM 3586 / NCPPB 528 / LMG 568 / P 25).